The sequence spans 1727 residues: DNA-directed RNA polymerase II subunit rpb1 (1727 aa).

Residues Cys66, Cys69, Cys76, His79, Cys106, Cys109, Cys147, and Cys175 each contribute to the Zn(2+) site. Positions 486, 488, and 490 each coordinate Mg(2+). A bridging helix region spans residues 819–831 (PQEFFFHAMGGRE). A Glycyl lysine isopeptide (Lys-Gly) (interchain with G-Cter in ubiquitin) cross-link involves residue Lys1266. 2 disordered regions span residues 1478-1512 (EPSN…YDAP) and 1551-1727 (PTYS…NKKK). Over residues 1480-1505 (SNVSYPDTPGSQTPSYSYGDGSTTPF) the composition is skewed to polar residues. 23 tandem repeats follow at residues 1553–1559 (YSPTSPS), 1560–1566 (YSPTSPS), 1567–1573 (YSPTSPS), 1574–1580 (YSPTSPS), 1581–1587 (YSPTSPS), 1588–1594 (YSPTSPS), 1595–1601 (YSPTSPF), 1602–1608 (YSPTSPS), 1609–1615 (YSPTSPS), 1616–1622 (YSPTSPS), 1623–1629 (YSPTSPS), 1630–1636 (YSPTSPS), 1637–1643 (YSPTSPS), 1644–1650 (YSPTSPS), 1651–1657 (YSPTSPS), 1658–1664 (YSPTSPS), 1665–1671 (YSPTSPS), 1672–1678 (YSPTSPS), 1679–1685 (YSPTSPS), 1686–1692 (YSPSSPS), 1693–1699 (YSPSSPS), 1700–1706 (YSPSSPS), and 1707–1713 (YSPSSPT). Positions 1553-1713 (YSPTSPSYSP…SPSYSPSSPT (161 aa)) are C-terminal domain (CTD); 23 X 7 AA tandem repeats of Y-S-P-[ST]-S-P-[FST].

It belongs to the RNA polymerase beta' chain family. As to quaternary structure, component of the RNA polymerase II (Pol II) complex consisting of 12 subunits. In terms of processing, the tandem heptapeptide repeats in the C-terminal domain (CTD) can be highly phosphorylated. The phosphorylation activates Pol II. Phosphorylation occurs mainly at residues 'Ser-2' and 'Ser-5' of the heptapeptide repeat. The phosphorylation state is believed to result from the balanced action of site-specific CTD kinases and phosphatase, and a 'CTD code' that specifies the position of Pol II within the transcription cycle has been proposed. Post-translationally, following transcription stress, the elongating form of RNA polymerase II (RNA pol IIo) is polyubiquitinated via 'Lys-63'-linkages on Lys-1266 at DNA damage sites without leading to degradation: ubiquitination promotes RNA pol IIo backtracking to allow access by the transcription-coupled nucleotide excision repair (TC-NER) machinery. Subsequent DEF1-dependent polyubiquitination by the elongin complex via 'Lys-48'-linkages may lead to proteasome-mediated degradation; presumably at stalled RNA pol II where TC-NER has failed, to halt global transcription and enable 'last resort' DNA repair pathways.

The protein localises to the nucleus. It carries out the reaction RNA(n) + a ribonucleoside 5'-triphosphate = RNA(n+1) + diphosphate. In terms of biological role, DNA-dependent RNA polymerase catalyzes the transcription of DNA into RNA using the four ribonucleoside triphosphates as substrates. Largest and catalytic component of RNA polymerase II which synthesizes mRNA precursors and many functional non-coding RNAs. Forms the polymerase active center together with the second largest subunit. Pol II is the central component of the basal RNA polymerase II transcription machinery. It is composed of mobile elements that move relative to each other. RPB1 is part of the core element with the central large cleft, the clamp element that moves to open and close the cleft and the jaws that are thought to grab the incoming DNA template. At the start of transcription, a single-stranded DNA template strand of the promoter is positioned within the central active site cleft of Pol II. A bridging helix emanates from RPB1 and crosses the cleft near the catalytic site and is thought to promote translocation of Pol II by acting as a ratchet that moves the RNA-DNA hybrid through the active site by switching from straight to bent conformations at each step of nucleotide addition. During transcription elongation, Pol II moves on the template as the transcript elongates. Elongation is influenced by the phosphorylation status of the C-terminal domain (CTD) of Pol II largest subunit (RPB1), which serves as a platform for assembly of factors that regulate transcription initiation, elongation, termination and mRNA processing. This chain is DNA-directed RNA polymerase II subunit rpb1 (polr2a), found in Dictyostelium discoideum (Social amoeba).